The primary structure comprises 295 residues: Sulfotransferase 1E1 (295 aa).

48 to 53 (KSGTTW) lines the 3'-phosphoadenylyl sulfate pocket. 106–108 (KSH) contributes to the substrate binding site. The Proton acceptor role is filled by histidine 108. 3'-phosphoadenylyl sulfate contacts are provided by arginine 130, serine 138, and tyrosine 193. 2 positions are modified to phosphoserine; by PKA: serine 216 and serine 228. 3'-phosphoadenylyl sulfate is bound by residues 227–232 (TSFQEM) and 257–259 (RKG).

Belongs to the sulfotransferase 1 family. Homodimer.

The protein localises to the cytoplasm. Its subcellular location is the cytosol. It catalyses the reaction estrone + 3'-phosphoadenylyl sulfate = estrone 3-sulfate + adenosine 3',5'-bisphosphate + H(+). The enzyme catalyses (24S)-hydroxycholesterol + 3'-phosphoadenylyl sulfate = (24S)-hydroxycholesterol 3-sulfate + adenosine 3',5'-bisphosphate + H(+). The catalysed reaction is 17beta-estradiol + 3'-phosphoadenylyl sulfate = 17beta-estradiol 3-sulfate + adenosine 3',5'-bisphosphate + H(+). It carries out the reaction 3beta-hydroxyandrost-5-en-17-one + 3'-phosphoadenylyl sulfate = dehydroepiandrosterone 3-sulfate + adenosine 3',5'-bisphosphate + H(+). It catalyses the reaction 4-ethylphenol + 3'-phosphoadenylyl sulfate = 4-ethylphenyl sulfate + adenosine 3',5'-bisphosphate + H(+). Its activity is regulated as follows. Inhibited by estradiol. Its function is as follows. Sulfotransferase that utilizes 3'-phospho-5'-adenylyl sulfate (PAPS) as sulfonate donor to catalyze the sulfate conjugation of estradiol and estrone. Is a key enzyme in estrogen homeostasis, the sulfation of estrogens leads to their inactivation. Also sulfates dehydroepiandrosterone (DHEA), pregnenolone, (24S)-hydroxycholesterol and xenobiotic compounds like ethinylestradiol, equalenin, diethyl stilbesterol and 1-naphthol at significantly lower efficiency. Does not sulfonate cortisol, testosterone and dopamine. May play a role in gut microbiota-host metabolic interaction. O-sulfonates 4-ethylphenol (4-EP), a dietary tyrosine-derived metabolite produced by gut bacteria. The product 4-EPS crosses the blood-brain barrier and may negatively regulate oligodendrocyte maturation and myelination, affecting the functional connectivity of different brain regions associated with the limbic system. This Bos taurus (Bovine) protein is Sulfotransferase 1E1 (SULT1E1).